The primary structure comprises 364 residues: MKFNEFLNHLSNYEPGKDIEVIAKEYGVKEVIKLASNENPFGTPPKAIECLRQNANKAHLYPDDSMIELKSTLAQKYKVQNENIIIGAGSDQVIEFAIHAKLNSKNAFLQAGVTFAMYEIYAKQCGAKCYKTQSITHDLNEFKKLYEAHKDEIKLIFLCLPNNPLGECLDASEVTKFIKGVDEDCLVVIDAAYNEFASFKDSKKHLEPCELIKEFDNVLYLGTFSKLYGLGGLRIGYGIANANIISAFYKLRAPFNVSNLALKAAVAAINDDEFAKKTLENNFSQMELYKEFAKKYDIKIIDSYTNFITYFFDEKNSTDLSEKLLKKGIIIRNLKSYGLNAIRITIGTSYENEKFFTEFDKILR.

Position 226 is an N6-(pyridoxal phosphate)lysine (lysine 226).

This sequence belongs to the class-II pyridoxal-phosphate-dependent aminotransferase family. Histidinol-phosphate aminotransferase subfamily. Homodimer. It depends on pyridoxal 5'-phosphate as a cofactor.

It catalyses the reaction L-histidinol phosphate + 2-oxoglutarate = 3-(imidazol-4-yl)-2-oxopropyl phosphate + L-glutamate. Its pathway is amino-acid biosynthesis; L-histidine biosynthesis; L-histidine from 5-phospho-alpha-D-ribose 1-diphosphate: step 7/9. This is Histidinol-phosphate aminotransferase from Campylobacter jejuni subsp. jejuni serotype O:23/36 (strain 81-176).